An 845-amino-acid chain; its full sequence is Ribonucleoside-diphosphate reductase subunit alpha (845 aa).

The region spanning 1 to 98 (MHIIKRNGEP…LYRDDRTKKR (98 aa)) is the ATP-cone domain. Substrate is bound by residues T303, 318 to 319 (SC), G347, 534 to 538 (NLCTE), and 725 to 729 (PTSST). Residues C319 and C574 are joined by a disulfide bond. The active-site Proton acceptor is N534. The active-site Cysteine radical intermediate is C536. E538 acts as the Proton acceptor in catalysis.

The protein belongs to the ribonucleoside diphosphate reductase large chain family. In terms of assembly, tetramer of two alpha and two beta subunits.

It catalyses the reaction a 2'-deoxyribonucleoside 5'-diphosphate + [thioredoxin]-disulfide + H2O = a ribonucleoside 5'-diphosphate + [thioredoxin]-dithiol. With respect to regulation, under complex allosteric control mediated by deoxynucleoside triphosphates and ATP binding. The type of nucleotide bound at the specificity site determines substrate preference. It seems probable that ATP makes the enzyme reduce CDP and UDP, dGTP favors ADP reduction and dTTP favors GDP reduction. Its function is as follows. Provides the precursors necessary for DNA synthesis. Catalyzes the biosynthesis of deoxyribonucleotides from the corresponding ribonucleotides. This Treponema pallidum (strain Nichols) protein is Ribonucleoside-diphosphate reductase subunit alpha (nrdA).